The sequence spans 66 residues: Beta-toxin Cbo1 (66 aa).

The LCN-type CS-alpha/beta domain occupies 1-66; the sequence is KEGYLVNHST…VWPLPKKTCN (66 aa). Cystine bridges form between cysteine 12-cysteine 65, cysteine 16-cysteine 41, cysteine 25-cysteine 46, and cysteine 29-cysteine 48. The residue at position 66 (asparagine 66) is an Asparagine amide.

It belongs to the long (4 C-C) scorpion toxin superfamily. Sodium channel inhibitor family. Beta subfamily. As to expression, expressed by the venom gland.

It localises to the secreted. Its function is as follows. Beta toxins bind voltage-independently at site-4 of sodium channels and shift the voltage of activation toward more negative potentials thereby affecting sodium channel activation and promoting spontaneous and repetitive firing. Is active on the human voltage-gated sodium channel Nav1.6/SCN8A when tested at 200 nM. In vivo, is toxic to mice when intraperitoneally injected. The chain is Beta-toxin Cbo1 from Centruroides bonito (Scorpion).